The chain runs to 257 residues: Undecaprenyl-diphosphatase (257 aa).

The next 7 membrane-spanning stretches (helical) occupy residues 42–62, 76–96, 103–123, 136–156, 172–192, 209–229, and 237–257; these read YVLFNLICHLGTLGSILYMFL, IFHIILGTLPLFPLVLILKPI, PQYLGLCFLFSAALLFSGVYF, CLTIGLFQAVAVLPGISRSGA, IQFSFLLAIPAILGGTFLEIW, QFLTGFITSFMIGCASLWAVI, and WVYFAWYCLFIGIATTLYFQM.

The protein belongs to the UppP family.

It localises to the cell inner membrane. The enzyme catalyses di-trans,octa-cis-undecaprenyl diphosphate + H2O = di-trans,octa-cis-undecaprenyl phosphate + phosphate + H(+). In terms of biological role, catalyzes the dephosphorylation of undecaprenyl diphosphate (UPP). Confers resistance to bacitracin. This chain is Undecaprenyl-diphosphatase, found in Protochlamydia amoebophila (strain UWE25).